A 1961-amino-acid polypeptide reads, in one-letter code: Ankyrin-3 (1961 aa).

Basic and acidic residues predominate over residues 1-10; that stretch reads MSEEPKEKPA. The tract at residues 1-25 is disordered; it reads MSEEPKEKPAKPAHRKRKGKKSDAN. Positions 11–20 are enriched in basic residues; the sequence is KPAHRKRKGK. At Ser-22 the chain carries Phosphoserine. ANK repeat units follow at residues 56-85, 89-118, 122-151, 155-184, 186-213, 217-246, 250-279, 283-312, 316-345, 349-378, 382-411, 415-444, 448-477, 481-510, 514-543, 547-576, 580-609, 613-642, 646-675, 679-708, 712-741, 745-774, and 778-807; these read NGLN…NVDA, KGNT…NVNA, NGFT…SQSL, DGFT…KGKV, LPAL…NADV, SGFT…AVDF, NDIT…KIDA, DGLT…PILS, NGLS…PVDD, DYLT…SPNA, NGFT…SIQA, SGLT…SPNT, RGET…QVEA, DDQT…SPNA, SGYT…SLSI, KGFT…SPDA, SGLT…SPHA, NGYT…DANA, QGIA…NVNL, SGLT…HVDA, MGYT…KVNA, NGYT…SPNE, and NGNT…EIMT. The residue at position 606 (Ser-606) is a Phosphoserine. Leu-732 carries the post-translational modification Phosphoserine. Residues Ser-830, Ser-844, Ser-850, Ser-873, Ser-914, Ser-917, Ser-923, Ser-958, Ser-960, and Ser-1114 each carry the phosphoserine modification. ZU5 domains are found at residues 985 to 1140 and 1142 to 1289; these read FLVS…VVSR and KQES…LADC. Residues 1274–1408 form a UPA domain region; the sequence is VSFTTNVSAR…SIKIRDTSQE (135 aa). A phosphoserine mark is found at Ser-1451, Ser-1462, Ser-1470, Ser-1473, and Gly-1560. The region spanning 1478–1562 is the Death domain; the sequence is TDIRMAIVAD…DIVTLLEGPI (85 aa). 5 disordered regions span residues 1606-1678, 1698-1740, 1784-1818, 1844-1884, and 1915-1961; these read PNPF…DPLD, SVPG…VTED, WQNE…DQAR, PEAK…PVSP, and MTRT…KKTH. A compositionally biased stretch (basic and acidic residues) spans 1725–1740; it reads QQEKGKSGPDEEVTED. Residues 1784-1795 show a composition bias toward polar residues; it reads WQNETPSGSLES. Residues Ser-1795, Ser-1813, and Ser-1883 each carry the phosphoserine modification. Basic and acidic residues predominate over residues 1808–1818; sequence DRLDDSSDQAR. A compositionally biased stretch (basic and acidic residues) spans 1933 to 1961; that stretch reads GSTRSEPKQGEGYKVKTKKEIRNVEKKTH.

In terms of assembly, may be a constituent of a NFASC/NRCAM/ankyrin G complex. Interacts with RHBG. Directly interacts with DMD and betaDAG1; this interaction does not interfere with DMD-binding and is required for DMD and betaDAG1 retention at costameres. Interacts (via N-terminal ANK repeats) with SCHIP1 isoform 7 (via C-terminus); this interaction is required for the localization at axon initial segments (AISs) and nodes of Ranvier (NRs). Interacts with PLEC and FLNC. Interacts with KCNA1; this inhibits channel activity. Interacts with SCN5A. Interacts with PKP2 and GJA1/CX43. Expressed in many epithelial tissues, muscles and axons. Expressed in kidney, brain, skin, lung, liver, intestine, pancreas, heart and testis (at protein level). In testis, expressed in Leydig cells, but very weakly or not at all in Sertoli cells or seminiferous tubules. Expressed in macrophages (at protein level).

It localises to the cytoplasm. Its subcellular location is the cytoskeleton. The protein localises to the cell projection. It is found in the axon. The protein resides in the cell membrane. It localises to the sarcolemma. Its subcellular location is the postsynaptic cell membrane. The protein localises to the lysosome. It is found in the T-tubule. In terms of biological role, membrane-cytoskeleton linker. May participate in the maintenance/targeting of ion channels and cell adhesion molecules at the nodes of Ranvier and axonal initial segments. In skeletal muscle, required for costamere localization of DMD and betaDAG1. Regulates KCNA1 channel activity in function of dietary Mg(2+) levels, and thereby contributes to the regulation of renal Mg(2+) reabsorption. Required for intracellular adhesion and junctional conductance in myocytes, potentially via stabilization of GJA1/CX43 protein abundance and promotion of PKP2, GJA1/CX43, and SCN5A/Nav1.5 localization to cell-cell junctions. In Mus musculus (Mouse), this protein is Ankyrin-3 (Ank3).